The primary structure comprises 863 residues: Glycogen phosphorylase (863 aa).

Lys618 carries the post-translational modification N6-(pyridoxal phosphate)lysine.

This sequence belongs to the glycogen phosphorylase family. The cofactor is pyridoxal 5'-phosphate.

It catalyses the reaction [(1-&gt;4)-alpha-D-glucosyl](n) + phosphate = [(1-&gt;4)-alpha-D-glucosyl](n-1) + alpha-D-glucose 1-phosphate. In terms of biological role, phosphorylase is an important allosteric enzyme in carbohydrate metabolism. Enzymes from different sources differ in their regulatory mechanisms and in their natural substrates. However, all known phosphorylases share catalytic and structural properties. The polypeptide is Glycogen phosphorylase (glgP) (Mycobacterium tuberculosis (strain ATCC 25618 / H37Rv)).